The chain runs to 233 residues: Leucyl/phenylalanyl-tRNA--protein transferase (233 aa).

Belongs to the L/F-transferase family.

It is found in the cytoplasm. The catalysed reaction is N-terminal L-lysyl-[protein] + L-leucyl-tRNA(Leu) = N-terminal L-leucyl-L-lysyl-[protein] + tRNA(Leu) + H(+). It catalyses the reaction N-terminal L-arginyl-[protein] + L-leucyl-tRNA(Leu) = N-terminal L-leucyl-L-arginyl-[protein] + tRNA(Leu) + H(+). The enzyme catalyses L-phenylalanyl-tRNA(Phe) + an N-terminal L-alpha-aminoacyl-[protein] = an N-terminal L-phenylalanyl-L-alpha-aminoacyl-[protein] + tRNA(Phe). Functions in the N-end rule pathway of protein degradation where it conjugates Leu, Phe and, less efficiently, Met from aminoacyl-tRNAs to the N-termini of proteins containing an N-terminal arginine or lysine. This chain is Leucyl/phenylalanyl-tRNA--protein transferase, found in Klebsiella pneumoniae subsp. pneumoniae (strain ATCC 700721 / MGH 78578).